The chain runs to 585 residues: MTITYTSQVANARLGSFSRLLLCWRGSIYKLLYGEFLIFLLCYYIIRFIYRLALTEEQQLMFEKLTLYCDSYIQLIPISFVLGFYVTLVVTRWWNQYENLPWPDRLMSLVSGFVEGKDEQGRLLRRTLIRYANLGNVLILRSVSTAVYKRFPSAQHLVQAGFMTPAEHKQLEKLSLPHNMFWVPWVWFANLSMKAWLGGRIRDPILLQSLLNEMNTLRTQCGHLYAYDWISIPLVYTQVVTVAVYSFFLTCLVGRQFLNPAKAYPGHELDLVVPVFTFLQFFFYVGWLKVAEQLINPFGEDDDDFETNWIVDRNLQVSLLAVDEMHQDLPRMEPDMYWNKPEPQPPYTAASAQFRRASFMGSTFNISLNKEEMEFQPNQEDEEDAHAGIIGRFLGLQSHDHHPPRANSRTKLLWPKRESLLHEGLPKNHKAAKQNVRGQEDNKAWKLKAVDAFKSAPLYQRPGYYSAPQTPLSPTPMFFPLEPSAPSKLHSVTGIDTKDKSLKTVSSGAKKSFELLSESDGALMEHPEVSQVRRKTVEFNLTDMPEIPENHLKEPLEQSPTNIHTTLKDHMDPYWALENRDEAHS.

Topologically, residues 1 to 31 (MTITYTSQVANARLGSFSRLLLCWRGSIYKL) are cytoplasmic. Alanine 10 lines the Ca(2+) pocket. A helical membrane pass occupies residues 32-51 (LYGEFLIFLLCYYIIRFIYR). The Extracellular portion of the chain corresponds to 52–60 (LALTEEQQL). The helical transmembrane segment at 61-82 (MFEKLTLYCDSYIQLIPISFVL) threads the bilayer. The Cytoplasmic segment spans residues 83-237 (GFYVTLVVTR…DWISIPLVYT (155 aa)). Residues 238–255 (QVVTVAVYSFFLTCLVGR) traverse the membrane as a helical segment. The Extracellular portion of the chain corresponds to 256-274 (QFLNPAKAYPGHELDLVVP). A helical transmembrane segment spans residues 275–288 (VFTFLQFFFYVGWL). Topologically, residues 289-585 (KVAEQLINPF…ALENRDEAHS (297 aa)) are cytoplasmic. Glutamine 293, asparagine 296, aspartate 301, and aspartate 304 together coordinate Ca(2+). Positions 346–379 (PYTAASAQFRRASFMGSTFNISLNKEEMEFQPNQ) are auto-inhibitory segment.

Belongs to the anion channel-forming bestrophin (TC 1.A.46) family. Calcium-sensitive chloride channel subfamily. As to quaternary structure, interacts with YWHAG; this interaction promotes the ligand-gated L-glutamate channel activity leading to the positive regulation of NMDA glutamate receptor activity through the L-glutamate secretion. As to expression, predominantly expressed in the basolateral membrane of the retinal pigment epithelium.

The protein resides in the cell membrane. It is found in the basolateral cell membrane. The enzyme catalyses chloride(in) = chloride(out). The catalysed reaction is hydrogencarbonate(in) = hydrogencarbonate(out). It carries out the reaction 4-aminobutanoate(in) = 4-aminobutanoate(out). It catalyses the reaction L-glutamate(out) = L-glutamate(in). With respect to regulation, inactivated by sulfhydryl-reactive agents. Functionally, ligand-gated anion channel that allows the movement of anions across cell membranes when activated by calcium (Ca2+). Allows the movement of chloride and hydrogencarbonate. Found in a partially open conformation leading to significantly smaller chloride movement. Upon F2R/PAR-1 activation, the sequestered calcium is released into the cytosol of astrocytes, leading to the (Ca2+)-dependent release of L-glutamate into the synaptic cleft that targets the neuronal postsynaptic GRIN2A/NMDAR receptor resulting in the synaptic plasticity regulation. Upon activation of the norepinephrine-alpha-1 adrenergic receptor signaling pathway, transports as well D-serine than L-glutamate in a (Ca2+)-dependent manner, leading to activation of adjacent NMDAR receptors and therefore regulates the heterosynaptic long-term depression and metaplasticity during initial memory acquisition. Releases the 4-aminobutanoate neurotransmitter in a (Ca2+)-dependent manner, and participates in its tonic release from cerebellar glial cells. The protein is Bestrophin-1 of Homo sapiens (Human).